Consider the following 150-residue polypeptide: Ribonuclease H (150 aa).

The RNase H type-1 domain maps to 2 to 143 (PAPILDIFVD…ADELANRAIE (142 aa)). 4 residues coordinate Mg(2+): Asp-11, Glu-49, Asp-71, and Asp-135.

The protein belongs to the RNase H family. In terms of assembly, monomer. The cofactor is Mg(2+).

It localises to the cytoplasm. The catalysed reaction is Endonucleolytic cleavage to 5'-phosphomonoester.. Functionally, endonuclease that specifically degrades the RNA of RNA-DNA hybrids. The polypeptide is Ribonuclease H (Dichelobacter nodosus (strain VCS1703A)).